A 1155-amino-acid polypeptide reads, in one-letter code: DNA-directed RNA polymerase subunit beta (1155 aa).

It belongs to the RNA polymerase beta chain family. The RNAP catalytic core consists of 2 alpha, 1 beta, 1 beta' and 1 omega subunit. When a sigma factor is associated with the core the holoenzyme is formed, which can initiate transcription.

The enzyme catalyses RNA(n) + a ribonucleoside 5'-triphosphate = RNA(n+1) + diphosphate. Functionally, DNA-dependent RNA polymerase catalyzes the transcription of DNA into RNA using the four ribonucleoside triphosphates as substrates. The sequence is that of DNA-directed RNA polymerase subunit beta from Borrelia duttonii (strain Ly).